The sequence spans 670 residues: Probable potassium transport system protein Kup (670 aa).

Residues 1–42 (MSQIPSPNDPPPAGAVPTSGAPAGPSATPAPSPTAGFSLPEH) are disordered. Low complexity predominate over residues 15 to 35 (AVPTSGAPAGPSATPAPSPTA). 12 helical membrane passes run 51–71 (LAALAVGALGVVYGDIGTSPL), 91–111 (VLGVLSLVFWAMTFVVTFKYM), 144–164 (VLLMLGLFGAALLYGDGIITP), 180–200 (PAMERVVVPATVVILVFLFLF), 208–228 (VGAVFGPIMLVWFATIAVLGV), 254–274 (GWHGFLVLGGVVLVITGGEAL), 290–310 (WLGLAMPALLLNYLGQGALLL), 322–342 (LLAPEWALYPTIAIATAAAIV), 380–400 (IYLPEVNWMLGTACVALVLGF), 406–426 (LASAYGIAVTGTMIVTTLLFH), 440–460 (AWPLTVLFLTVDASFFLANVV), and 464–484 (DGGWFPIAAAALVFTLMSTWK).

This sequence belongs to the HAK/KUP transporter (TC 2.A.72) family.

The protein localises to the cell inner membrane. It catalyses the reaction K(+)(in) + H(+)(in) = K(+)(out) + H(+)(out). Transport of potassium into the cell. Likely operates as a K(+):H(+) symporter. The polypeptide is Probable potassium transport system protein Kup (Anaeromyxobacter dehalogenans (strain 2CP-C)).